Consider the following 438-residue polypeptide: Gamma-glutamyl phosphate reductase (438 aa).

Belongs to the gamma-glutamyl phosphate reductase family.

Its subcellular location is the cytoplasm. It catalyses the reaction L-glutamate 5-semialdehyde + phosphate + NADP(+) = L-glutamyl 5-phosphate + NADPH + H(+). It functions in the pathway amino-acid biosynthesis; L-proline biosynthesis; L-glutamate 5-semialdehyde from L-glutamate: step 2/2. Functionally, catalyzes the NADPH-dependent reduction of L-glutamate 5-phosphate into L-glutamate 5-semialdehyde and phosphate. The product spontaneously undergoes cyclization to form 1-pyrroline-5-carboxylate. The polypeptide is Gamma-glutamyl phosphate reductase (Prochlorococcus marinus (strain MIT 9313)).